A 596-amino-acid chain; its full sequence is Invasin CotH7 (596 aa).

The N-terminal stretch at 1–17 (MKSLSFISLACLTAVHA) is a signal peptide. N-linked (GlcNAc...) asparagine glycans are attached at residues asparagine 82, asparagine 146, asparagine 163, asparagine 169, asparagine 288, asparagine 440, and asparagine 544. Residues 528-544 (SATIAAPATSESASQDN) show a composition bias toward low complexity. The segment at 528 to 557 (SATIAAPATSESASQDNTSDDTDSASTSSS) is disordered. Residue serine 567 is the site of GPI-anchor amidated serine attachment. Positions 568 to 596 (SASKSAPTFYCLQLVLYLSLSFKNLYKYI) are cleaved as a propeptide — removed in mature form.

In terms of assembly, interacts with host integrin beta-1 ITGB1 on the cell surface of host alveolar epithelial cells.

The protein resides in the cell membrane. Its function is as follows. Promotes invasion of host epithelial cells by adhering to receptors on the host cell surface to facilitate endocytosis of the pathogen into host cells. Probably binds integrin ITGA3:ITGB1 via ITGB1, on the cell surface of host alveolar epithelial cells. The protein is Invasin CotH7 of Rhizopus delemar (strain RA 99-880 / ATCC MYA-4621 / FGSC 9543 / NRRL 43880) (Mucormycosis agent).